Reading from the N-terminus, the 119-residue chain is Large ribosomal subunit protein bL20 (119 aa).

Belongs to the bacterial ribosomal protein bL20 family.

Functionally, binds directly to 23S ribosomal RNA and is necessary for the in vitro assembly process of the 50S ribosomal subunit. It is not involved in the protein synthesizing functions of that subunit. The chain is Large ribosomal subunit protein bL20 from Caldicellulosiruptor bescii (strain ATCC BAA-1888 / DSM 6725 / KCTC 15123 / Z-1320) (Anaerocellum thermophilum).